Reading from the N-terminus, the 158-residue chain is MRAVIQRVKAAKVTVLDELVSSIGPGLCVLVGIKASDTAKDVEYLVRKILALRLFEEEGKRWQKSVKDLNLELLCVSQFTLYHRLKGNKPDFLAAMKGEEAQELYNQFLDRLGQSYDSTKIKDGKFGAYMQVHIENDGPVTINLESPEQKDTDREVDK.

Positions 138-139 match the Gly-cisPro motif, important for rejection of L-amino acids motif; it reads GP.

This sequence belongs to the DTD family. As to quaternary structure, homodimer.

The protein resides in the cytoplasm. The catalysed reaction is glycyl-tRNA(Ala) + H2O = tRNA(Ala) + glycine + H(+). It carries out the reaction a D-aminoacyl-tRNA + H2O = a tRNA + a D-alpha-amino acid + H(+). Its function is as follows. An aminoacyl-tRNA editing enzyme that deacylates mischarged D-aminoacyl-tRNAs. Hydrolyzes correctly charged, achiral, glycyl-tRNA(Gly). Deacylates mischarged endogenous and E.coli glycyl-tRNA(Ala), protecting cells against glycine mischarging by AlaRS. Acts via tRNA-based rather than protein-based catalysis; rejects L-amino acids rather than detecting D-amino acids in the active site. By recycling D-aminoacyl-tRNA to D-amino acids and free tRNA molecules, this enzyme counteracts the toxicity associated with the formation of D-aminoacyl-tRNA entities in vivo and helps enforce protein L-homochirality. This Drosophila melanogaster (Fruit fly) protein is D-aminoacyl-tRNA deacylase.